Here is a 480-residue protein sequence, read N- to C-terminus: Outer capsid protein VP5 (480 aa).

Positions 1–48 (MTSKRLGARFPGFLNRIGSGITRAARSDTTKRIPSAAGRAVERVAASE) are involved in membrane permeabilization.

Belongs to the orbivirus VP5 family.

Its subcellular location is the virion. Its function is as follows. VP5 protein is one of the two proteins (with VP2) which constitute the virus particle outer capsid. Acts as a membrane permeabilization protein that mediates release of viral particles from endosomal compartments into the cytoplasm. Permeabilization activity is probably negatively regulated by VP2 and is triggered by endosomal degradation of VP2 and exposure to low pH. The chain is Outer capsid protein VP5 (Segment-6) from Ixodes (gulls).